A 156-amino-acid polypeptide reads, in one-letter code: Small ribosomal subunit protein uS7 (156 aa).

It belongs to the universal ribosomal protein uS7 family. Part of the 30S ribosomal subunit. Contacts proteins S9 and S11.

Functionally, one of the primary rRNA binding proteins, it binds directly to 16S rRNA where it nucleates assembly of the head domain of the 30S subunit. Is located at the subunit interface close to the decoding center, probably blocks exit of the E-site tRNA. This Methylobacterium nodulans (strain LMG 21967 / CNCM I-2342 / ORS 2060) protein is Small ribosomal subunit protein uS7.